The following is a 23-amino-acid chain: Benzaldehyde dehydrogenase [NAD(+)] I (23 aa).

The protein belongs to the aldehyde dehydrogenase family. As to quaternary structure, homotetramer.

The enzyme catalyses benzaldehyde + NAD(+) + H2O = benzoate + NADH + 2 H(+). The protein is Benzaldehyde dehydrogenase [NAD(+)] I of Acinetobacter guillouiae (Acinetobacter genomosp. 11).